Here is a 318-residue protein sequence, read N- to C-terminus: Transaldolase (318 aa).

Lys-132 serves as the catalytic Schiff-base intermediate with substrate.

It belongs to the transaldolase family. Type 1 subfamily. As to quaternary structure, homodimer.

It localises to the cytoplasm. It catalyses the reaction D-sedoheptulose 7-phosphate + D-glyceraldehyde 3-phosphate = D-erythrose 4-phosphate + beta-D-fructose 6-phosphate. It functions in the pathway carbohydrate degradation; pentose phosphate pathway; D-glyceraldehyde 3-phosphate and beta-D-fructose 6-phosphate from D-ribose 5-phosphate and D-xylulose 5-phosphate (non-oxidative stage): step 2/3. Its function is as follows. Transaldolase is important for the balance of metabolites in the pentose-phosphate pathway. This chain is Transaldolase, found in Shewanella sp. (strain MR-4).